Consider the following 162-residue polypeptide: Single-stranded DNA-binding protein 1 (162 aa).

The region spanning 5–110 (LNKVMLIGHL…IVCTDMQMLG (106 aa)) is the SSB domain. A disordered region spans residues 110–162 (GAKDSGGGTSDASYSQNRPSYSRPSRPEPSSGNYGASPSSGGAQEFEKDDLPF). Over residues 122–140 (SYSQNRPSYSRPSRPEPSS) the composition is skewed to low complexity. Polar residues predominate over residues 141–151 (GNYGASPSSGG).

In terms of assembly, homotetramer.

In Chlorobaculum tepidum (strain ATCC 49652 / DSM 12025 / NBRC 103806 / TLS) (Chlorobium tepidum), this protein is Single-stranded DNA-binding protein 1 (ssb1).